Consider the following 264-residue polypeptide: Late embryogenesis abundant protein D-34 (264 aa).

Low complexity predominate over residues 1 to 16 (MSQGQPRRPQQPAGQG). A disordered region spans residues 1–23 (MSQGQPRRPQQPAGQGENQEPIK). 3 consecutive SMP domains span residues 22-76 (IKYG…RNEQ), 138-194 (ITIG…AHNA), and 203-261 (IKLN…LNEN).

It belongs to the LEA type SMP family.

In terms of biological role, LEA proteins are late embryonic proteins abundant in higher plant seed embryos. There are two subsets of LEA proteins (5a and 5b), the first ones are expressed when the cotyledon weight reach 80 mg and the second set are expressed above 100 mg. The function of those proteins is not known. The protein is Late embryogenesis abundant protein D-34 of Gossypium hirsutum (Upland cotton).